The sequence spans 87 residues: Small ribosomal subunit protein uS15c (87 aa).

The protein belongs to the universal ribosomal protein uS15 family. As to quaternary structure, part of the 30S ribosomal subunit.

It localises to the plastid. The protein resides in the chloroplast. This chain is Small ribosomal subunit protein uS15c (rps15), found in Atropa belladonna (Belladonna).